A 281-amino-acid chain; its full sequence is Oxidase pynE (281 aa).

It belongs to the avfA family.

Its pathway is secondary metabolite biosynthesis. Functionally, oxidase; part of the gene cluster that mediates the biosynthesis of pyranonigrins, a family of antioxidative compounds. The first step of pyranonigrins biosynthesis is performed by the hybrid PKS-NRPS synthetase that condenses 6 malonyl-CoA units to an acetyl starter unit, to form a 1,3,5-trioxotetradecane-6,8-dienyl-ACP. The enoyl reductase (ER) domain of pynA is likely to be functional during the first two rounds of polyketide chain extension, to generate the saturated C-C bonds of the alkyl side chain. PynA subsequently forms the amide bond between the acyl chain and L-serine. Although pynA has a terminal reductase domain, it appears to require the thioesterase pynI for the release of the straight-chain intermediate from pynA via the formation of a tetramic acid pyranonigrin J. The methyltransferase pynC then coverts pyranonigrin J to pyranonigrin I via N-methylation. The FAD-dependent monooxygenase pynG catalyzes an epoxidation-mediated cyclization to form the dihydro-gamma-pyrone moiety, followed by pynD-catalyzed oxidation of the alcohol to the ketone and enolization to yield the characteristic tetramic acid-fused gamma-pyrone core of pyranonigrin H. Pyranonigrin H is substrate of pynH for dehydration-mediated exo-methylene formation from the serine side chain to produce pyranonigrin E, before the oxidase pynE reduces the exo-methylene of pyranonigrin E into a pendant methyl to form pyranonigrin G. The FAD-linked oxidoreductase pynB performs the reverse reaction and converts pyranonigrin G back to pyranonigrin E. The sequence is that of Oxidase pynE from Aspergillus niger (strain ATCC MYA-4892 / CBS 513.88 / FGSC A1513).